The following is a 399-amino-acid chain: Myb-related transcription factor, partner of profilin (399 aa).

The Myb-like domain maps to 12–84; it reads TTRLRKPRFS…EVQKRWNDFK (73 aa). The Nuclear localization signal motif lies at 83 to 86; the sequence is FKRR. 4 disordered regions span residues 87-108, 127-261, 297-332, and 358-399; these read TKEK…AEDA, PGAG…PSLD, LLPG…PKVE, and APRS…WKSP. A compositionally biased stretch (low complexity) spans 127–136; it reads PGAGAGAEEP. Residues 137–149 show a composition bias toward pro residues; the sequence is PAAPSSQPPPPSA. Over residues 156-170 the composition is skewed to basic and acidic residues; the sequence is LSEDRREDRRADTSA. Pro residues-rich tracts occupy residues 219 to 252, 305 to 329, and 366 to 377; these read SPPP…PPPT, SLPP…PPAP, and PRPPPAPLPPHD. The span at 381-399 shows a compositional bias: basic residues; the sequence is HKRRKGFPTRKRRGRWKSP. Short sequence motifs (nuclear localization signal) lie at residues 382 to 385 and 390 to 393; these read KRRK and RKRR.

Interacts with PFN1. Homodimer and heterodimer with PFN1.

The protein localises to the nucleus. Functionally, transcriptional repressor; DNA-binding protein that specifically recognizes the core sequence 5'-YAAC[GT]G-3'. Dimerization with PFN1 reduces its DNA-binding capacity. This Homo sapiens (Human) protein is Myb-related transcription factor, partner of profilin (MYPOP).